Here is a 49-residue protein sequence, read N- to C-terminus: Osteocalcin (49 aa).

Residues 1–47 form the Gla domain; that stretch reads YLDHGLGAPAPYVDPLEPKREVCELNPDCDELADQMGFQEAYRRFYG. At proline 9 the chain carries 4-hydroxyproline. Ca(2+)-binding residues include glutamate 17, glutamate 21, glutamate 24, and aspartate 30. 4-carboxyglutamate occurs at positions 17, 21, and 24. Cysteine 23 and cysteine 29 are disulfide-bonded.

This sequence belongs to the osteocalcin/matrix Gla protein family. Post-translationally, gamma-carboxyglutamic acid residues are formed by vitamin K dependent carboxylation. These residues are essential for the binding of calcium.

It localises to the secreted. Its function is as follows. The carboxylated form is one of the main organic components of the bone matrix, which constitutes 1-2% of the total bone protein: it acts as a negative regulator of bone formation and is required to limit bone formation without impairing bone resorption or mineralization. The carboxylated form binds strongly to apatite and calcium. The uncarboxylated form acts as a hormone secreted by osteoblasts, which regulates different cellular processes, such as energy metabolism, male fertility and brain development. Regulates of energy metabolism by acting as a hormone favoring pancreatic beta-cell proliferation, insulin secretion and sensitivity and energy expenditure. Uncarboxylated osteocalcin hormone also promotes testosterone production in the testes: acts as a ligand for G protein-coupled receptor GPRC6A at the surface of Leydig cells, initiating a signaling response that promotes the expression of enzymes required for testosterone synthesis in a CREB-dependent manner. Also acts as a regulator of brain development: osteocalcin hormone crosses the blood-brain barrier and acts as a ligand for GPR158 on neurons, initiating a signaling response that prevents neuronal apoptosis in the hippocampus, favors the synthesis of all monoamine neurotransmitters and inhibits that of gamma-aminobutyric acid (GABA). Osteocalcin also crosses the placenta during pregnancy and maternal osteocalcin is required for fetal brain development. This Lama guanicoe (Guanaco) protein is Osteocalcin.